The chain runs to 141 residues: Acetyltransferase YPN_1354 (141 aa).

The 141-residue stretch at 1–141 folds into the N-acetyltransferase domain; the sequence is MEIRIFQQDD…GKRLIVDQEY (141 aa).

It belongs to the acetyltransferase family. YpeA subfamily.

The chain is Acetyltransferase YPN_1354 from Yersinia pestis bv. Antiqua (strain Nepal516).